The primary structure comprises 193 residues: Segregation and condensation protein B (193 aa).

This sequence belongs to the ScpB family. In terms of assembly, homodimer. Homodimerization may be required to stabilize the binding of ScpA to the Smc head domains. Component of a cohesin-like complex composed of ScpA, ScpB and the Smc homodimer, in which ScpA and ScpB bind to the head domain of Smc. The presence of the three proteins is required for the association of the complex with DNA.

It localises to the cytoplasm. Participates in chromosomal partition during cell division. May act via the formation of a condensin-like complex containing Smc and ScpA that pull DNA away from mid-cell into both cell halves. The protein is Segregation and condensation protein B of Shouchella clausii (strain KSM-K16) (Alkalihalobacillus clausii).